Here is an 81-residue protein sequence, read N- to C-terminus: ATP synthase subunit c, chloroplastic (81 aa).

2 helical membrane-spanning segments follow: residues 3-23 and 57-77; these read PLVF…ASIG and LAFM…LLFA.

The protein belongs to the ATPase C chain family. F-type ATPases have 2 components, F(1) - the catalytic core - and F(0) - the membrane proton channel. F(1) has five subunits: alpha(3), beta(3), gamma(1), delta(1), epsilon(1). F(0) has four main subunits: a(1), b(1), b'(1) and c(10-14). The alpha and beta chains form an alternating ring which encloses part of the gamma chain. F(1) is attached to F(0) by a central stalk formed by the gamma and epsilon chains, while a peripheral stalk is formed by the delta, b and b' chains.

The protein resides in the plastid. It is found in the chloroplast thylakoid membrane. F(1)F(0) ATP synthase produces ATP from ADP in the presence of a proton or sodium gradient. F-type ATPases consist of two structural domains, F(1) containing the extramembraneous catalytic core and F(0) containing the membrane proton channel, linked together by a central stalk and a peripheral stalk. During catalysis, ATP synthesis in the catalytic domain of F(1) is coupled via a rotary mechanism of the central stalk subunits to proton translocation. Its function is as follows. Key component of the F(0) channel; it plays a direct role in translocation across the membrane. A homomeric c-ring of between 10-14 subunits forms the central stalk rotor element with the F(1) delta and epsilon subunits. The chain is ATP synthase subunit c, chloroplastic from Atropa belladonna (Belladonna).